We begin with the raw amino-acid sequence, 174 residues long: ATP-dependent protease subunit HslV (174 aa).

Residue threonine 2 is part of the active site. Residues glycine 157, cysteine 160, and threonine 163 each contribute to the Na(+) site.

Belongs to the peptidase T1B family. HslV subfamily. A double ring-shaped homohexamer of HslV is capped on each side by a ring-shaped HslU homohexamer. The assembly of the HslU/HslV complex is dependent on binding of ATP.

It localises to the cytoplasm. The enzyme catalyses ATP-dependent cleavage of peptide bonds with broad specificity.. Allosterically activated by HslU binding. Its function is as follows. Protease subunit of a proteasome-like degradation complex believed to be a general protein degrading machinery. The sequence is that of ATP-dependent protease subunit HslV from Shewanella halifaxensis (strain HAW-EB4).